Consider the following 402-residue polypeptide: Multidrug resistance protein MdtG (402 aa).

11 helical membrane-spanning segments follow: residues 14-34 (LYIVWFGCFLTGAGFSLIMPF), 52-72 (LWTGVAFSITFLFSAIAAPFW), 90-110 (LGMAIVMVLIGFAQNIWQLLI), 113-133 (ALLGVLGGFVPNANALIATQV), 149-169 (AVSGALIGPLIGGILADLYGL), 171-191 (PVFFITAAVLFICFIVTLFFV), 219-239 (VICLFFTTMIIQVATGSVTPI), 254-274 (LAFISGVIASVPGIAALISAP), 288-308 (VLIFTLGLSIFMLIPMALVSN), 318-338 (LLGAVNAAMLPAVQTLILYNI), and 376-396 (AVFYFTAAVVFFNLIYSWISF).

It belongs to the major facilitator superfamily. DHA1 family. MdtG (TC 2.A.1.2.20) subfamily.

The protein resides in the cell inner membrane. The polypeptide is Multidrug resistance protein MdtG (Proteus mirabilis (strain HI4320)).